The primary structure comprises 414 residues: Serine hydroxymethyltransferase (414 aa).

Residues Leu121 and 125–127 (GHL) contribute to the (6S)-5,6,7,8-tetrahydrofolate site. N6-(pyridoxal phosphate)lysine is present on Lys229.

Belongs to the SHMT family. In terms of assembly, homodimer. Pyridoxal 5'-phosphate serves as cofactor.

It localises to the cytoplasm. The enzyme catalyses (6R)-5,10-methylene-5,6,7,8-tetrahydrofolate + glycine + H2O = (6S)-5,6,7,8-tetrahydrofolate + L-serine. It participates in one-carbon metabolism; tetrahydrofolate interconversion. Its pathway is amino-acid biosynthesis; glycine biosynthesis; glycine from L-serine: step 1/1. In terms of biological role, catalyzes the reversible interconversion of serine and glycine with tetrahydrofolate (THF) serving as the one-carbon carrier. This reaction serves as the major source of one-carbon groups required for the biosynthesis of purines, thymidylate, methionine, and other important biomolecules. Also exhibits THF-independent aldolase activity toward beta-hydroxyamino acids, producing glycine and aldehydes, via a retro-aldol mechanism. The chain is Serine hydroxymethyltransferase from Herminiimonas arsenicoxydans.